A 418-amino-acid chain; its full sequence is Beta-arrestin-1 (418 aa).

The segment at 1-163 (MGDKGTRVFK…LEEKIHKRNS (163 aa)) is interaction with SRC. The interaction with CHRM2 stretch occupies residues 45 to 86 (PEYLKERRVYVTLTCAFRYGREDLDVLGLTFRKDLFVANVQS). Y47 carries the post-translational modification Phosphotyrosine. Residues K250, M255, K324, and K326 each contribute to the 1D-myo-inositol hexakisphosphate site. Residues 318-418 (IVSYKVKVKL…GTGSPHLNNR (101 aa)) are interaction with TRAF6. 2 disordered regions span residues 353-374 (HPKPKEEPPHREVPESETPVDT) and 397-418 (KGMKDDKDEEDDGTGSPHLNNR). Residues 355-366 (KPKEEPPHREVP) show a composition bias toward basic and acidic residues. Phosphoserine is present on S412. S412 is subject to Phosphoserine; by GRK5.

This sequence belongs to the arrestin family. Monomer. Homodimer. Homooligomer; the self-association is mediated by InsP6-binding. Heterooligomer with ARRB2; the association is mediated by InsP6-binding. Interacts with ADRB2 (phosphorylated). Interacts with CHRM2 (phosphorylated). Interacts with LHCGR. Interacts with CYTH2 and CASR. Interacts with AP2B1 (dephosphorylated at 'Tyr-737'); phosphorylation of AP2B1 at 'Tyr-737' disrupts the interaction. Interacts (dephosphorylated at Ser-412) with CLTC. Interacts with CCR2 and GRK2. Interacts with CRR5. Interacts with PTAFR (phosphorylated on serine residues). Interacts with CLTC and MAP2K3. Interacts with CREB1. Interacts with TRAF6. Interacts with IGF1R and MDM2. Interacts with C5AR1. Interacts with PDE4D. Interacts with SRC (via the SH3 domain and the protein kinase domain); the interaction is independent of the phosphorylation state of SRC C-terminus. Interacts with TACR1. Interacts with RAF1. Interacts with CHUK, IKBKB and MAP3K14. Interacts with DVL1; the interaction is enhanced by phosphorylation of DVL1. Interacts with DVL2; the interaction is enhanced by phosphorylation of DVL2. Interacts with IGF1R. Associates with MAP kinase p38. Part of a MAPK signaling complex consisting of TACR1, ARRB1, SRC, MAPK1 (activated) and MAPK3 (activated). Part of a MAPK signaling complex consisting of F2RL1, ARRB1, RAF1, MAPK1 (activated) and MAPK3 (activated). Interacts with GPR143. Interacts with MAP2K4/MKK4. Interacts with HCK and CXCR1 (phosphorylated). Interacts with ACKR3 and ACKR4. Interacts with ARRDC1; the interaction is direct. Interacts with GPR61, GPR62 and GPR135. Post-translationally, constitutively phosphorylated at Ser-412 in the cytoplasm. At the plasma membrane, is rapidly dephosphorylated, a process that is required for clathrin binding and beta-2 adrenergic receptor/ADRB2 endocytosis but not for ADRB2 binding and desensitization. Once internalized, is rephosphorylated. In terms of processing, the ubiquitination status appears to regulate the formation and trafficking of beta-arrestin-GPCR complexes and signaling. Ubiquitination appears to occur GPCR-specific. Ubiquitinated by MDM2; the ubiquitination is required for rapid internalization of ADRB2. Deubiquitinated by USP33; the deubiquitination leads to a dissociation of the beta-arrestin-GPCR complex. Stimulation of a class A GPCR, such as ADRB2, induces transient ubiquitination and subsequently promotes association with USP33. In terms of tissue distribution, predominantly localized in neuronal tissues and in the spleen.

The protein resides in the cytoplasm. It localises to the nucleus. Its subcellular location is the cell membrane. It is found in the membrane. The protein localises to the clathrin-coated pit. The protein resides in the cell projection. It localises to the pseudopodium. Its subcellular location is the cytoplasmic vesicle. In terms of biological role, functions in regulating agonist-mediated G-protein coupled receptor (GPCR) signaling by mediating both receptor desensitization and resensitization processes. During homologous desensitization, beta-arrestins bind to the GPRK-phosphorylated receptor and sterically preclude its coupling to the cognate G-protein; the binding appears to require additional receptor determinants exposed only in the active receptor conformation. The beta-arrestins target many receptors for internalization by acting as endocytic adapters (CLASPs, clathrin-associated sorting proteins) and recruiting the GPRCs to the adapter protein 2 complex 2 (AP-2) in clathrin-coated pits (CCPs). However, the extent of beta-arrestin involvement appears to vary significantly depending on the receptor, agonist and cell type. Internalized arrestin-receptor complexes traffic to intracellular endosomes, where they remain uncoupled from G-proteins. Two different modes of arrestin-mediated internalization occur. Class A receptors, like ADRB2, OPRM1, ENDRA, D1AR and ADRA1B dissociate from beta-arrestin at or near the plasma membrane and undergo rapid recycling. Class B receptors, like AVPR2, AGTR1, NTSR1, TRHR and TACR1 internalize as a complex with arrestin and traffic with it to endosomal vesicles, presumably as desensitized receptors, for extended periods of time. Receptor resensitization then requires that receptor-bound arrestin is removed so that the receptor can be dephosphorylated and returned to the plasma membrane. Involved in internalization of P2RY4 and UTP-stimulated internalization of P2RY2. Involved in phosphorylation-dependent internalization of OPRD1 ands subsequent recycling. Involved in the degradation of cAMP by recruiting cAMP phosphodiesterases to ligand-activated receptors. Beta-arrestins function as multivalent adapter proteins that can switch the GPCR from a G-protein signaling mode that transmits short-lived signals from the plasma membrane via small molecule second messengers and ion channels to a beta-arrestin signaling mode that transmits a distinct set of signals that are initiated as the receptor internalizes and transits the intracellular compartment. Acts as a signaling scaffold for MAPK pathways such as MAPK1/3 (ERK1/2). ERK1/2 activated by the beta-arrestin scaffold is largely excluded from the nucleus and confined to cytoplasmic locations such as endocytic vesicles, also called beta-arrestin signalosomes. Recruits c-Src/SRC to ADRB2 resulting in ERK activation. GPCRs for which the beta-arrestin-mediated signaling relies on both ARRB1 and ARRB2 (codependent regulation) include ADRB2, F2RL1 and PTH1R. For some GPCRs the beta-arrestin-mediated signaling relies on either ARRB1 or ARRB2 and is inhibited by the other respective beta-arrestin form (reciprocal regulation). Inhibits ERK1/2 signaling in AGTR1- and AVPR2-mediated activation (reciprocal regulation). Is required for SP-stimulated endocytosis of NK1R and recruits c-Src/SRC to internalized NK1R resulting in ERK1/2 activation, which is required for the antiapoptotic effects of SP. Is involved in proteinase-activated F2RL1-mediated ERK activity. Acts as a signaling scaffold for the AKT1 pathway. Is involved in alpha-thrombin-stimulated AKT1 signaling. Is involved in IGF1-stimulated AKT1 signaling leading to increased protection from apoptosis. Involved in activation of the p38 MAPK signaling pathway and in actin bundle formation. Involved in F2RL1-mediated cytoskeletal rearrangement and chemotaxis. Involved in AGTR1-mediated stress fiber formation by acting together with GNAQ to activate RHOA. Appears to function as signaling scaffold involved in regulation of MIP-1-beta-stimulated CCR5-dependent chemotaxis. Involved in attenuation of NF-kappa-B-dependent transcription in response to GPCR or cytokine stimulation by interacting with and stabilizing CHUK. May serve as nuclear messenger for GPCRs. Involved in OPRD1-stimulated transcriptional regulation by translocating to CDKN1B and FOS promoter regions and recruiting EP300 resulting in acetylation of histone H4. Involved in regulation of LEF1 transcriptional activity via interaction with DVL1 and/or DVL2 Also involved in regulation of receptors other than GPCRs. Involved in Toll-like receptor and IL-1 receptor signaling through the interaction with TRAF6 which prevents TRAF6 autoubiquitination and oligomerization required for activation of NF-kappa-B and JUN. Binds phosphoinositides. Binds inositolhexakisphosphate (InsP6). Involved in IL8-mediated granule release in neutrophils. Required for atypical chemokine receptor ACKR2-induced RAC1-LIMK1-PAK1-dependent phosphorylation of cofilin (CFL1) and for the up-regulation of ACKR2 from endosomal compartment to cell membrane, increasing its efficiency in chemokine uptake and degradation. Involved in the internalization of the atypical chemokine receptor ACKR3. Negatively regulates the NOTCH signaling pathway by mediating the ubiquitination and degradation of NOTCH1 by ITCH. Participates in the recruitment of the ubiquitin-protein ligase to the receptor. In Rattus norvegicus (Rat), this protein is Beta-arrestin-1.